Reading from the N-terminus, the 407-residue chain is S-adenosylmethionine synthase (407 aa).

His21 contributes to the ATP binding site. Asp23 lines the Mg(2+) pocket. Glu49 contacts K(+). Positions 62 and 105 each coordinate L-methionine. Positions 105-115 (QSQEIGAGVDA) are flexible loop. ATP is bound by residues 179 to 181 (DGK), Asp259, 265 to 266 (RK), Ala282, and Lys286. Position 259 (Asp259) interacts with L-methionine. Lys290 is an L-methionine binding site.

Belongs to the AdoMet synthase family. Homotetramer; dimer of dimers. Mg(2+) is required as a cofactor. K(+) serves as cofactor.

The protein localises to the cytoplasm. It catalyses the reaction L-methionine + ATP + H2O = S-adenosyl-L-methionine + phosphate + diphosphate. It functions in the pathway amino-acid biosynthesis; S-adenosyl-L-methionine biosynthesis; S-adenosyl-L-methionine from L-methionine: step 1/1. Its function is as follows. Catalyzes the formation of S-adenosylmethionine (AdoMet) from methionine and ATP. The overall synthetic reaction is composed of two sequential steps, AdoMet formation and the subsequent tripolyphosphate hydrolysis which occurs prior to release of AdoMet from the enzyme. The protein is S-adenosylmethionine synthase of Corynebacterium aurimucosum (strain ATCC 700975 / DSM 44827 / CIP 107346 / CN-1) (Corynebacterium nigricans).